Reading from the N-terminus, the 343-residue chain is C-X-C chemokine receptor type 6 (343 aa).

The Extracellular segment spans residues 1–33; sequence MAEYDHYEDDEFFNSFNDSSQKEHQDFLQFSKV. N-linked (GlcNAc...) asparagine glycosylation occurs at N17. A helical transmembrane segment spans residues 34 to 60; the sequence is FLPCMYLVVFVCGLVGNSLVLVISIFY. The Cytoplasmic portion of the chain corresponds to 61-69; the sequence is HKLQSLTDV. Residues 70–90 form a helical membrane-spanning segment; the sequence is FLVNLPLADLVFVCTLPFWAY. Residues 91 to 104 lie on the Extracellular side of the membrane; it reads AGIHEWIFGQVMCK. Cysteines 103 and 181 form a disulfide. Residues 105–126 form a helical membrane-spanning segment; sequence TLLGVYTINFYTSMLILTCITV. The Cytoplasmic segment spans residues 127–144; sequence DRFIVVVKATKAYNQQAK. A helical transmembrane segment spans residues 145 to 165; sequence RMTWGKVICLLIWVISLLVSL. Residues 166-188 are Extracellular-facing; that stretch reads PQIIYGNVFNLDKLICRYHDEEI. The chain crosses the membrane as a helical span at residues 189–216; sequence STVVLATQMTLGFFLPLLTMIVCYSVII. The Cytoplasmic segment spans residues 217-232; the sequence is KTLLHAGGFQKHRSLK. Residues 233 to 260 traverse the membrane as a helical segment; the sequence is IIFLVMAVFLLTQTPFNLVKLIRSTHWE. The Extracellular portion of the chain corresponds to 261–276; that stretch reads YYAMTSFHYTIIVTEA. Residues 277-294 form a helical membrane-spanning segment; sequence IAYLRACLNPVLYAFVSL. The Cytoplasmic portion of the chain corresponds to 295–343; that stretch reads KFRKNFWKLVKDIGCLPYLGVSHQWKSSEDNSKTFSASHNVEATSMFQL.

The protein belongs to the G-protein coupled receptor 1 family.

It is found in the cell membrane. Receptor for the C-X-C chemokine CXCL16. Used as a coreceptor by SIVs and by strains of HIV-2 and m-tropic HIV-1. This Cercocebus atys (Sooty mangabey) protein is C-X-C chemokine receptor type 6 (CXCR6).